A 243-amino-acid polypeptide reads, in one-letter code: Probable phosphatase CBO3379/CLC_3322 (243 aa).

9 residues coordinate Zn(2+): His8, His10, His16, His41, Glu74, His102, His132, Asp192, and His194.

It belongs to the PHP family. Zn(2+) serves as cofactor.

This is Probable phosphatase CBO3379/CLC_3322 from Clostridium botulinum (strain Hall / ATCC 3502 / NCTC 13319 / Type A).